The primary structure comprises 893 residues: NEDD4-binding protein 1 (893 aa).

In terms of domain architecture, KH-like spans 59–143 (QEAVHSAKEY…IQQFVKLFES (85 aa)). The disordered stretch occupies residues 213–243 (EYTQSAATGPSSARDEVVVQEDSRNKARTPV). Polar residues predominate over residues 214-223 (YTQSAATGPS). Basic and acidic residues predominate over residues 225 to 237 (ARDEVVVQEDSRN). Residue Thr241 is modified to Phosphothreonine. 3 positions are modified to phosphoserine: Ser257, Ser269, and Ser299. 3 disordered regions span residues 273-339 (DALS…DGKD), 394-433 (RDFPPCTVYPDASQSRNAGVGSTTNELTADSTPKKAQSHT), and 472-564 (IWGS…PPLP). Polar residues-rich tracts occupy residues 405-433 (ASQSRNAGVGSTTNELTADSTPKKAQSHT) and 523-537 (GFQQQTEPLLPNNTK). Over residues 551–564 (QPKPNYPPLSPPLP) the composition is skewed to pro residues. Residue Ser560 is modified to Phosphoserine. The RNase NYN domain occupies 615–767 (LKHIVIDGSN…LGRNGPRLEE (153 aa)). The interval 793–820 (PGFRSPSTQVANNSHQPPPRIQTSSSPW) is disordered. Positions 797–820 (SPSTQVANNSHQPPPRIQTSSSPW) are enriched in polar residues. Residues 846–893 (RSSAETSELREALLKIFPDSEQKLKIDQILAAHPYMKDLNALSALVLD) are coCUN.

This sequence belongs to the N4BP1 family. As to quaternary structure, interacts with NEDD4. Interacts with ITCH (via WW domain 2). Post-translationally, proteolytically cleaved by CASP8 downstream of TLR3 or TLR4, leading to its inactivation. Mainly cleaved at Asp-488 by CASP8. Cleaved by caspase-like protein MALT1, leading to its inactivation. In terms of processing, mono- and polyubiquitinated on the CoCUN region. Monoubiquitinated by NEDD4. Polyubiquitinated, leading to its degradation by the proteasome. Sumoylated with SUMO1, abrogating polyubiquitination and subsequent degradation. Desumoylated by SENP1, leading to accumulation in PML nuclear bodies.

Its subcellular location is the cytoplasm. The protein resides in the cytosol. The protein localises to the nucleus. It localises to the nucleolus. It is found in the PML body. Proteolytic cleavage by CASP8 or MALT1 leads to its inactivation. Potent suppressor of cytokine production that acts as a regulator of innate immune signaling and inflammation. Acts as a key negative regulator of select cytokine and chemokine responses elicited by TRIF-independent Toll-like receptors (TLRs), thereby limiting inflammatory cytokine responses to minor insults. In response to more threatening pathogens, cleaved by CASP8 downstream of TLR3 or TLR4, leading to its inactivation, thereby allowing production of inflammatory cytokines. Acts as a restriction factor against some viruses: restricts viral replication by binding to mRNA viruses and mediating their degradation via its ribonuclease activity. Also acts as an inhibitor of the E3 ubiquitin-protein ligase ITCH: acts by interacting with the second WW domain of ITCH, leading to compete with ITCH's substrates and impairing ubiquitination of substrates. This Mus musculus (Mouse) protein is NEDD4-binding protein 1.